We begin with the raw amino-acid sequence, 588 residues long: 2-succinyl-5-enolpyruvyl-6-hydroxy-3-cyclohexene-1-carboxylate synthase (588 aa).

The segment at 1 to 22 is disordered; that stretch reads MTTTGSLPAQPSSTSPRTGNPS.

This sequence belongs to the TPP enzyme family. MenD subfamily. Homodimer. Mg(2+) serves as cofactor. The cofactor is Mn(2+). Requires thiamine diphosphate as cofactor.

It carries out the reaction isochorismate + 2-oxoglutarate + H(+) = 5-enolpyruvoyl-6-hydroxy-2-succinyl-cyclohex-3-ene-1-carboxylate + CO2. It participates in quinol/quinone metabolism; 1,4-dihydroxy-2-naphthoate biosynthesis; 1,4-dihydroxy-2-naphthoate from chorismate: step 2/7. The protein operates within quinol/quinone metabolism; menaquinone biosynthesis. Its function is as follows. Catalyzes the thiamine diphosphate-dependent decarboxylation of 2-oxoglutarate and the subsequent addition of the resulting succinic semialdehyde-thiamine pyrophosphate anion to isochorismate to yield 2-succinyl-5-enolpyruvyl-6-hydroxy-3-cyclohexene-1-carboxylate (SEPHCHC). This is 2-succinyl-5-enolpyruvyl-6-hydroxy-3-cyclohexene-1-carboxylate synthase from Clavibacter michiganensis subsp. michiganensis (strain NCPPB 382).